The chain runs to 210 residues: N-(5'-phosphoribosyl)anthranilate isomerase (210 aa).

The protein belongs to the TrpF family.

It catalyses the reaction N-(5-phospho-beta-D-ribosyl)anthranilate = 1-(2-carboxyphenylamino)-1-deoxy-D-ribulose 5-phosphate. The protein operates within amino-acid biosynthesis; L-tryptophan biosynthesis; L-tryptophan from chorismate: step 3/5. In Eremothecium gossypii (strain ATCC 10895 / CBS 109.51 / FGSC 9923 / NRRL Y-1056) (Yeast), this protein is N-(5'-phosphoribosyl)anthranilate isomerase (TRP1).